Here is a 109-residue protein sequence, read N- to C-terminus: Nucleoid-associated protein A1S_1684 (109 aa).

The protein belongs to the YbaB/EbfC family. In terms of assembly, homodimer.

The protein localises to the cytoplasm. It is found in the nucleoid. Its function is as follows. Binds to DNA and alters its conformation. May be involved in regulation of gene expression, nucleoid organization and DNA protection. The sequence is that of Nucleoid-associated protein A1S_1684 from Acinetobacter baumannii (strain ATCC 17978 / DSM 105126 / CIP 53.77 / LMG 1025 / NCDC KC755 / 5377).